A 128-amino-acid polypeptide reads, in one-letter code: Large ribosomal subunit protein bL12 (128 aa).

The protein belongs to the bacterial ribosomal protein bL12 family. In terms of assembly, homodimer. Part of the ribosomal stalk of the 50S ribosomal subunit. Forms a multimeric L10(L12)X complex, where L10 forms an elongated spine to which 2 to 4 L12 dimers bind in a sequential fashion. Binds GTP-bound translation factors.

Forms part of the ribosomal stalk which helps the ribosome interact with GTP-bound translation factors. Is thus essential for accurate translation. The sequence is that of Large ribosomal subunit protein bL12 from Corynebacterium glutamicum (strain R).